The sequence spans 259 residues: Small ribosomal subunit protein uS2 (259 aa).

Belongs to the universal ribosomal protein uS2 family.

The polypeptide is Small ribosomal subunit protein uS2 (Streptococcus pneumoniae (strain 70585)).